The chain runs to 215 residues: Thiamine-phosphate synthase (215 aa).

4-amino-2-methyl-5-(diphosphooxymethyl)pyrimidine is bound by residues 40 to 44 (QLRIK) and N72. D73 and D92 together coordinate Mg(2+). A 4-amino-2-methyl-5-(diphosphooxymethyl)pyrimidine-binding site is contributed by S111. 137-139 (TTT) provides a ligand contact to 2-[(2R,5Z)-2-carboxy-4-methylthiazol-5(2H)-ylidene]ethyl phosphate. 4-amino-2-methyl-5-(diphosphooxymethyl)pyrimidine is bound at residue K140. 2-[(2R,5Z)-2-carboxy-4-methylthiazol-5(2H)-ylidene]ethyl phosphate-binding positions include G169 and 189 to 190 (VS).

Belongs to the thiamine-phosphate synthase family. It depends on Mg(2+) as a cofactor.

The catalysed reaction is 2-[(2R,5Z)-2-carboxy-4-methylthiazol-5(2H)-ylidene]ethyl phosphate + 4-amino-2-methyl-5-(diphosphooxymethyl)pyrimidine + 2 H(+) = thiamine phosphate + CO2 + diphosphate. It carries out the reaction 2-(2-carboxy-4-methylthiazol-5-yl)ethyl phosphate + 4-amino-2-methyl-5-(diphosphooxymethyl)pyrimidine + 2 H(+) = thiamine phosphate + CO2 + diphosphate. It catalyses the reaction 4-methyl-5-(2-phosphooxyethyl)-thiazole + 4-amino-2-methyl-5-(diphosphooxymethyl)pyrimidine + H(+) = thiamine phosphate + diphosphate. It participates in cofactor biosynthesis; thiamine diphosphate biosynthesis; thiamine phosphate from 4-amino-2-methyl-5-diphosphomethylpyrimidine and 4-methyl-5-(2-phosphoethyl)-thiazole: step 1/1. Its function is as follows. Condenses 4-methyl-5-(beta-hydroxyethyl)thiazole monophosphate (THZ-P) and 2-methyl-4-amino-5-hydroxymethyl pyrimidine pyrophosphate (HMP-PP) to form thiamine monophosphate (TMP). This is Thiamine-phosphate synthase from Proteus mirabilis (strain HI4320).